A 940-amino-acid polypeptide reads, in one-letter code: Isoleucine--tRNA ligase (940 aa).

The 'HIGH' region motif lies at proline 58–histidine 68. Glutamate 564 is a binding site for L-isoleucyl-5'-AMP. Positions lysine 605–serine 609 match the 'KMSKS' region motif. Residue lysine 608 participates in ATP binding. Positions 903, 906, 923, and 926 each coordinate Zn(2+).

This sequence belongs to the class-I aminoacyl-tRNA synthetase family. IleS type 1 subfamily. As to quaternary structure, monomer. Zn(2+) is required as a cofactor.

It localises to the cytoplasm. It carries out the reaction tRNA(Ile) + L-isoleucine + ATP = L-isoleucyl-tRNA(Ile) + AMP + diphosphate. Its function is as follows. Catalyzes the attachment of isoleucine to tRNA(Ile). As IleRS can inadvertently accommodate and process structurally similar amino acids such as valine, to avoid such errors it has two additional distinct tRNA(Ile)-dependent editing activities. One activity is designated as 'pretransfer' editing and involves the hydrolysis of activated Val-AMP. The other activity is designated 'posttransfer' editing and involves deacylation of mischarged Val-tRNA(Ile). The sequence is that of Isoleucine--tRNA ligase from Shewanella piezotolerans (strain WP3 / JCM 13877).